Reading from the N-terminus, the 240-residue chain is Phosphoribosylaminoimidazole-succinocarboxamide synthase (240 aa).

This sequence belongs to the SAICAR synthetase family.

The enzyme catalyses 5-amino-1-(5-phospho-D-ribosyl)imidazole-4-carboxylate + L-aspartate + ATP = (2S)-2-[5-amino-1-(5-phospho-beta-D-ribosyl)imidazole-4-carboxamido]succinate + ADP + phosphate + 2 H(+). It functions in the pathway purine metabolism; IMP biosynthesis via de novo pathway; 5-amino-1-(5-phospho-D-ribosyl)imidazole-4-carboxamide from 5-amino-1-(5-phospho-D-ribosyl)imidazole-4-carboxylate: step 1/2. The protein is Phosphoribosylaminoimidazole-succinocarboxamide synthase of Pyrobaculum calidifontis (strain DSM 21063 / JCM 11548 / VA1).